The chain runs to 341 residues: UDP-3-O-acylglucosamine N-acyltransferase (341 aa).

His-241 serves as the catalytic Proton acceptor.

This sequence belongs to the transferase hexapeptide repeat family. LpxD subfamily. Homotrimer.

The catalysed reaction is a UDP-3-O-[(3R)-3-hydroxyacyl]-alpha-D-glucosamine + a (3R)-hydroxyacyl-[ACP] = a UDP-2-N,3-O-bis[(3R)-3-hydroxyacyl]-alpha-D-glucosamine + holo-[ACP] + H(+). It participates in bacterial outer membrane biogenesis; LPS lipid A biosynthesis. Catalyzes the N-acylation of UDP-3-O-acylglucosamine using 3-hydroxyacyl-ACP as the acyl donor. Is involved in the biosynthesis of lipid A, a phosphorylated glycolipid that anchors the lipopolysaccharide to the outer membrane of the cell. The protein is UDP-3-O-acylglucosamine N-acyltransferase of Histophilus somni (strain 129Pt) (Haemophilus somnus).